Here is a 223-residue protein sequence, read N- to C-terminus: Endonuclease NucS (223 aa).

Belongs to the NucS endonuclease family.

Its subcellular location is the cytoplasm. Functionally, cleaves both 3' and 5' ssDNA extremities of branched DNA structures. This Mycobacterium marinum (strain ATCC BAA-535 / M) protein is Endonuclease NucS.